A 630-amino-acid polypeptide reads, in one-letter code: Differentially expressed in FDCP 6 (630 aa).

Phosphotyrosine is present on Tyr-210. The region spanning 216 to 312 is the PH domain; the sequence is DVLKQGYLWK…WTAAIQTAIR (97 aa). Lys-225 carries the N6-acetyllysine modification. Disordered regions lie at residues 318-341, 378-418, and 552-630; these read KTSL…RRRA, LQEE…ELKK, and HPIE…APGN. Basic and acidic residues-rich tracts occupy residues 331-341 and 378-392; these read EQREQRERRRA and LQEE…HKEL. Residues 588–606 are compositionally biased toward polar residues; sequence WGSQGNRTLSVNSSEQKSL. Ser-590 is modified (phosphoserine). The span at 620-630 shows a compositional bias: basic and acidic residues; that stretch reads QEEKLDPAPGN.

Interacts with IRF4, activated RAC1 and F-actin. Both the phosphorylated and non-phosphorylated forms bind phosphatidylinositol 3,4,5-trisphosphate (PtdInsP3). Interacts with ZAP70. Interacts with RAB11A. In terms of processing, tyrosine-phosphorylated by tyrosine-protein kinase LCK in response to T-cell activation. In terms of tissue distribution, thymus.

It is found in the cytoplasm. The protein resides in the cell membrane. It localises to the nucleus. Its subcellular location is the cytoskeleton. The protein localises to the perinuclear region. It is found in the cell projection. The protein resides in the filopodium. Phosphatidylinositol 3,4,5-trisphosphate-dependent guanine nucleotide exchange factor (GEF) which plays a role in the activation of Rho GTPases RAC1, RhoA and CDC42. Can regulate cell morphology in cooperation with activated RAC1. Involved in immune homeostasis by ensuring proper trafficking and availability of T-cell regulator CTLA-4 at T-cell surface. Plays a role in Th2 (T helper cells) development and/or activation, perhaps by interfering with ZAP70 signaling. Required for optimal T-cell effector function, lymphocyte homeostasis and the prevention of systemic autoimmunity. This Mus musculus (Mouse) protein is Differentially expressed in FDCP 6 (Def6).